The sequence spans 357 residues: Thiamine thiazole synthase 1, chloroplastic (357 aa).

Residues 1–51 constitute a chloroplast transit peptide; the sequence is MSISAAGVATGLGANVELKSNVGSSSSSVAGVRLFTSRKAQLRRCAAPATS. Residues alanine 103, 123 to 124, glycine 131, and alanine 196 contribute to the substrate site; that span reads EQ. 2,3-didehydroalanine (Cys) is present on cysteine 225. Substrate contacts are provided by residues aspartate 227, histidine 242, methionine 294, and 304–306; that span reads RMG.

The protein belongs to the THI4 family. In terms of assembly, homooctamer. It depends on Fe cation as a cofactor. In terms of processing, during the catalytic reaction, a sulfide is transferred from Cys-225 to a reaction intermediate, generating a dehydroalanine residue.

It localises to the plastid. The protein resides in the chloroplast. It catalyses the reaction [ADP-thiazole synthase]-L-cysteine + glycine + NAD(+) = [ADP-thiazole synthase]-dehydroalanine + ADP-5-ethyl-4-methylthiazole-2-carboxylate + nicotinamide + 3 H2O + 2 H(+). Involved in biosynthesis of the thiamine precursor thiazole. Catalyzes the conversion of NAD and glycine to adenosine diphosphate 5-(2-hydroxyethyl)-4-methylthiazole-2-carboxylic acid (ADT), an adenylated thiazole intermediate. The reaction includes an iron-dependent sulfide transfer from a conserved cysteine residue of the protein to a thiazole intermediate. The enzyme can only undergo a single turnover, which suggests it is a suicide enzyme. May have additional roles in adaptation to various stress conditions and in DNA damage tolerance. The protein is Thiamine thiazole synthase 1, chloroplastic of Physcomitrium patens (Spreading-leaved earth moss).